We begin with the raw amino-acid sequence, 119 residues long: Ribosome-binding factor A (119 aa).

Belongs to the RbfA family. Monomer. Binds 30S ribosomal subunits, but not 50S ribosomal subunits or 70S ribosomes.

Its subcellular location is the cytoplasm. In terms of biological role, one of several proteins that assist in the late maturation steps of the functional core of the 30S ribosomal subunit. Associates with free 30S ribosomal subunits (but not with 30S subunits that are part of 70S ribosomes or polysomes). Required for efficient processing of 16S rRNA. May interact with the 5'-terminal helix region of 16S rRNA. This Buchnera aphidicola subsp. Baizongia pistaciae (strain Bp) protein is Ribosome-binding factor A.